A 185-amino-acid polypeptide reads, in one-letter code: Ribosome-recycling factor (185 aa).

Belongs to the RRF family.

The protein resides in the cytoplasm. Responsible for the release of ribosomes from messenger RNA at the termination of protein biosynthesis. May increase the efficiency of translation by recycling ribosomes from one round of translation to another. The protein is Ribosome-recycling factor of Klebsiella pneumoniae (strain 342).